An 858-amino-acid chain; its full sequence is Translation initiation factor IF-2 (858 aa).

The interval 49 to 271 (TTTVTHPKSQ…NKPAPVRKDK (223 aa)) is disordered. The segment covering 80–226 (NQQQSNSRHQ…RFGGSLNSNN (147 aa)) has biased composition (low complexity). Residues 239 to 256 (NRRRNNRNNKSRNNKNQR) show a composition bias toward basic residues. One can recognise a tr-type G domain in the interval 359-528 (PRAPVVTVMG…LLQSEVLELT (170 aa)). Positions 368–375 (GHVDHGKT) are G1. 368 to 375 (GHVDHGKT) contacts GTP. Positions 393–397 (GITQA) are G2. The interval 414–417 (DTPG) is G3. Residues 414 to 418 (DTPGH) and 468 to 471 (NKID) contribute to the GTP site. The G4 stretch occupies residues 468–471 (NKID). The segment at 504–506 (SAK) is G5.

This sequence belongs to the TRAFAC class translation factor GTPase superfamily. Classic translation factor GTPase family. IF-2 subfamily.

The protein resides in the cytoplasm. Its function is as follows. One of the essential components for the initiation of protein synthesis. Protects formylmethionyl-tRNA from spontaneous hydrolysis and promotes its binding to the 30S ribosomal subunits. Also involved in the hydrolysis of GTP during the formation of the 70S ribosomal complex. This is Translation initiation factor IF-2 from Lactiplantibacillus plantarum (strain ATCC BAA-793 / NCIMB 8826 / WCFS1) (Lactobacillus plantarum).